We begin with the raw amino-acid sequence, 473 residues long: Photosystem II CP43 reaction center protein (473 aa).

A propeptide spanning residues 1–14 (MKTLYSLRRFYHVE) is cleaved from the precursor. At threonine 15 the chain carries N-acetylthreonine. Threonine 15 bears the Phosphothreonine mark. The next 5 membrane-spanning stretches (helical) occupy residues 69-93 (LFEV…PHLA), 134-155 (LLGP…KDRN), 178-200 (KALY…RKIT), 255-275 (KPFA…LSYS), and 291-312 (WFNN…ASQA). [CaMn4O5] cluster is bound at residue glutamate 367. The helical transmembrane segment at 447 to 471 (RARAAAAGFEKGIDRDLEPVLFMTP) threads the bilayer.

This sequence belongs to the PsbB/PsbC family. PsbC subfamily. PSII is composed of 1 copy each of membrane proteins PsbA, PsbB, PsbC, PsbD, PsbE, PsbF, PsbH, PsbI, PsbJ, PsbK, PsbL, PsbM, PsbT, PsbX, PsbY, PsbZ, Psb30/Ycf12, at least 3 peripheral proteins of the oxygen-evolving complex and a large number of cofactors. It forms dimeric complexes. Binds multiple chlorophylls and provides some of the ligands for the Ca-4Mn-5O cluster of the oxygen-evolving complex. It may also provide a ligand for a Cl- that is required for oxygen evolution. PSII binds additional chlorophylls, carotenoids and specific lipids. serves as cofactor.

The protein localises to the plastid. Its subcellular location is the chloroplast thylakoid membrane. In terms of biological role, one of the components of the core complex of photosystem II (PSII). It binds chlorophyll and helps catalyze the primary light-induced photochemical processes of PSII. PSII is a light-driven water:plastoquinone oxidoreductase, using light energy to abstract electrons from H(2)O, generating O(2) and a proton gradient subsequently used for ATP formation. The protein is Photosystem II CP43 reaction center protein of Carica papaya (Papaya).